The primary structure comprises 107 residues: Early E3A 12.5 kDa protein (107 aa).

This sequence belongs to the adenoviridae E3A-2 family.

The polypeptide is Early E3A 12.5 kDa protein (Homo sapiens (Human)).